The following is a 103-amino-acid chain: Probable protease inhibitor Egf0.4b (103 aa).

Residues 1–22 (MMSEKFALVLLVACIAFIGIET) form the signal peptide. The region spanning 35 to 87 (CGENEAYDSMRRGCEERCDDHNPTFCFKFTTVCWCEKGYVRDKSDTCIKVEDC) is the TIL domain.

This sequence belongs to the polydnaviridae EGF-like motif protein family.

The polypeptide is Probable protease inhibitor Egf0.4b (O11) (Microplitis demolitor bracovirus (isolate Webb) (MdBV)).